We begin with the raw amino-acid sequence, 604 residues long: Lipoprotein LpqB (604 aa).

The first 27 residues, 1 to 27 (MTMRAARLSGSTGLTAALVAVLLVLTG), serve as a signal peptide directing secretion. Cysteine 28 carries the N-palmitoyl cysteine lipid modification. Cysteine 28 is lipidated: S-diacylglycerol cysteine. The disordered stretch occupies residues 35-60 (SAPQALGTIDREPTSEGPTPPIAGRD).

It belongs to the LpqB lipoprotein family.

The protein resides in the cell membrane. The polypeptide is Lipoprotein LpqB (Nocardia farcinica (strain IFM 10152)).